An 802-amino-acid polypeptide reads, in one-letter code: Nuclear polyadenylated RNA-binding protein 3 (802 aa).

Disordered regions lie at residues 1–174 (MSDE…RRET) and 252–293 (ALSV…RMRF). Low complexity predominate over residues 22 to 34 (SNSNENELMNNSS). The segment covering 37–73 (DGIEFDAPEEEREAEREEENEEQHELEDVNDEEEEDK) has biased composition (acidic residues). The residue at position 86 (threonine 86) is a Phosphothreonine. Acidic residues-rich tracts occupy residues 101 to 139 (DDDD…EEGN) and 149 to 158 (AAEDGEDEED). The span at 159 to 174 (KKDKTKDKEVELRRET) shows a compositional bias: basic and acidic residues. Over residues 260-276 (STISTTASASATSGARS) the composition is skewed to low complexity. Residues 277-293 (NDQRKPPLSDAQRRMRF) are compositionally biased toward basic and acidic residues. One can recognise an RRM domain in the interval 330 to 401 (SRLFIGNLPL…KKLILEVSSS (72 aa)). A Phosphothreonine modification is found at threonine 451. 2 disordered regions span residues 571–675 (IYGA…PMDQ) and 717–802 (MQGQ…KLQK). The span at 575 to 590 (PPLPVPNGPAVGPPPQ) shows a compositional bias: pro residues. Low complexity predominate over residues 593-614 (YYQGYSMPPPQQQQQQPYGNYG). Polar residues predominate over residues 632–642 (MNQSYGRYQTS). 2 stretches are compositionally biased toward low complexity: residues 651-661 (QIPQGYGRYQA) and 717-738 (MQGQ…MNSS). Over residues 745 to 754 (TNYNGQNISA) the composition is skewed to polar residues. Over residues 757–769 (SAPPMSHQPPPPQ) the composition is skewed to pro residues. The span at 770–785 (QQQQQQQQQQQQQQQP) shows a compositional bias: low complexity.

It is found in the nucleus. The protein resides in the nucleoplasm. May be required for packaging pre-mRNAs into ribonucleoprotein structures amenable to efficient nuclear RNA processing. Binds to poly(A)+ RNA. Appears to act in the maintenance of CLN3 mRNA levels. This is Nuclear polyadenylated RNA-binding protein 3 (NAB3) from Saccharomyces cerevisiae (strain ATCC 204508 / S288c) (Baker's yeast).